Consider the following 516-residue polypeptide: D-aminopeptidase (516 aa).

The active-site Nucleophile is Ser-61. Lys-64 serves as the catalytic Proton donor/acceptor. An important for specificity region spans residues Arg-476–Asp-486. Asp-480 is a binding site for substrate.

It belongs to the peptidase S12 family. As to quaternary structure, homodimer.

The enzyme catalyses Release of an N-terminal D-amino acid from a peptide, Xaa-|-Yaa-, in which Xaa is preferably D-Ala, D-Ser or D-Thr. D-amino acid amides and methyl esters also are hydrolyzed, as is glycine amide.. Its activity is regulated as follows. Inhibited by beta-lactam compounds such as 6-aminopenicillic acid, 7-aminocephalosporanic acid, benzylpenicillin and ampicillin. Inhibited by p-chloromercuribenzoate. In terms of biological role, hydrolyzes N-terminal residues in D-amino acid-containing peptides. The polypeptide is D-aminopeptidase (Cereibacter sphaeroides (strain ATCC 17029 / ATH 2.4.9) (Rhodobacter sphaeroides)).